The sequence spans 581 residues: Adenine deaminase (581 aa).

This sequence belongs to the metallo-dependent hydrolases superfamily. Adenine deaminase family. The cofactor is Mn(2+).

It catalyses the reaction adenine + H2O + H(+) = hypoxanthine + NH4(+). The sequence is that of Adenine deaminase from Brucella suis biovar 1 (strain 1330).